The chain runs to 968 residues: Leucine--tRNA ligase (968 aa).

A compositionally biased stretch (polar residues) spans 1-13 (MTETPTGTQSSRE). Residues 1–22 (MTETPTGTQSSRETAADDTPRH) are disordered. The short motif at 75 to 86 (PYPSGEGLHVGH) is the 'HIGH' region element. The 'KMSKS' region signature appears at 741–745 (KIGKS). Residue Lys-744 participates in ATP binding.

Belongs to the class-I aminoacyl-tRNA synthetase family.

The protein resides in the cytoplasm. It catalyses the reaction tRNA(Leu) + L-leucine + ATP = L-leucyl-tRNA(Leu) + AMP + diphosphate. This Mycolicibacterium vanbaalenii (strain DSM 7251 / JCM 13017 / BCRC 16820 / KCTC 9966 / NRRL B-24157 / PYR-1) (Mycobacterium vanbaalenii) protein is Leucine--tRNA ligase.